Here is a 1356-residue protein sequence, read N- to C-terminus: Tenascin-R (1356 aa).

An N-terminal signal peptide occupies residues Met-1–Cys-31. An N-linked (GlcNAc...) asparagine glycan is attached at Asn-55. Positions Cys-127–Thr-157 form a coiled coil. Ser-176 carries O-linked (Xyl...) (chondroitin sulfate) serine glycosylation. Asn-180 and Asn-198 each carry an N-linked (GlcNAc...) asparagine glycan. EGF-like domains lie at Cys-188–Cys-199, Cys-204–Cys-230, and Cys-235–Cys-261. An O-linked (Xyl...) (chondroitin sulfate) serine glycan is attached at Ser-271. Asn-278 carries an N-linked (GlcNAc...) asparagine glycan. EGF-like domains lie at Cys-281–Cys-292 and Ser-293–Ser-324. 2 disulfides stabilise this stretch: Cys-297–Cys-307 and Cys-314–Cys-323. An O-linked (Xyl...) (chondroitin sulfate) serine glycan is attached at Ser-302. 9 consecutive Fibronectin type-III domains span residues Pro-328–Gly-419, Leu-420–Asp-504, Gly-505–Pro-596, Lys-597–Asp-686, Ser-687–Ile-776, Ser-777–Asp-864, Pro-865–Ser-953, Pro-954–Asp-1040, and Pro-1041–Val-1129. N-linked (GlcNAc...) asparagine glycans are attached at residues Asn-391, Asn-469, and Asn-580. Ser-723 carries the post-translational modification Phosphoserine. Residues Asn-790, Asn-868, Asn-873, Asn-1034, Asn-1044, and Asn-1259 are each glycosylated (N-linked (GlcNAc...) asparagine). The region spanning Gly-1127–Ile-1342 is the Fibrinogen C-terminal domain.

The protein belongs to the tenascin family. As to quaternary structure, forms oligomers. Interacts with TNC and FN1. Interacts with BCAN and ACAN in a calcium -dependent manner. Interacts with CNTN1, SCN2B, PTPRZ1, and CSPG3. Contains N-linked oligosaccharides, O-linked sialylated structures. Contains O-linked chondroitin sulfate glycosaminoglycans. Contains N-linked oligosaccharides with a sulfated carbohydrate structure type GalNAc-4-SO4 or HNK-1 (SO4-3-GlcUABeta1,3GalBeta1,4GlcNAc). The levels of HNK-1 rise and fall in parallel to those of TNR during postnatal development of the cerebellum. In contrast, levels of GalNAc-4-SO4 are regulated independently from those of TNR, rising late in cerebellar development and continuing into adulthood. Early in postnatal development, GalNAc-4-SO4 is found predominantly on isoform 1, whereas in the adult it is predominantly on isoform 2. In terms of tissue distribution, brain-specific. Expressed in oligodendrocytes and small subsets of neurons (mainly interneurons and motoneurons) of the cerebellum, hippocampus and olfactory bulb. Expressed in dorsal root ganglia.

It is found in the secreted. Its subcellular location is the extracellular space. It localises to the extracellular matrix. Functionally, neural extracellular matrix (ECM) protein involved in interactions with different cells and matrix components. Theses interactions can influence cellular behavior by either evoking a stable adhesion and differentiation, or repulsion and inhibition of neurite growth. Binding to cell surface gangliosides inhibits RGD-dependent integrin-mediated cell adhesion and results in an inhibition of PTK2/FAK1 (FAK) phosphorylation and cell detachment. Binding to membrane surface sulfatides results in a oligodendrocyte adhesion and differentiation. Interaction with CNTN1 induces a repulsion of neurons and an inhibition of neurite outgrowth. Interacts with SCN2B may play a crucial role in clustering and regulation of activity of sodium channels at nodes of Ranvier. TNR-linked chondroitin sulfate glycosaminoglycans are involved in the interaction with FN1 and mediates inhibition of cell adhesion and neurite outgrowth. The highly regulated addition of sulfated carbohydrate structure may modulate the adhesive properties of TNR over the course of development and during synapse maintenance. In Rattus norvegicus (Rat), this protein is Tenascin-R (Tnr).